Here is a 228-residue protein sequence, read N- to C-terminus: Probable methylthioribulose-1-phosphate dehydratase (228 aa).

Residue Cys87 participates in substrate binding. The Zn(2+) site is built by His105 and His107. The active-site Proton donor/acceptor is the Glu129. Residue His185 coordinates Zn(2+).

This sequence belongs to the aldolase class II family. MtnB subfamily. Zn(2+) is required as a cofactor.

It is found in the cytoplasm. It catalyses the reaction 5-(methylsulfanyl)-D-ribulose 1-phosphate = 5-methylsulfanyl-2,3-dioxopentyl phosphate + H2O. It participates in amino-acid biosynthesis; L-methionine biosynthesis via salvage pathway; L-methionine from S-methyl-5-thio-alpha-D-ribose 1-phosphate: step 2/6. Its function is as follows. Catalyzes the dehydration of methylthioribulose-1-phosphate (MTRu-1-P) into 2,3-diketo-5-methylthiopentyl-1-phosphate (DK-MTP-1-P). The protein is Probable methylthioribulose-1-phosphate dehydratase of Drosophila willistoni (Fruit fly).